We begin with the raw amino-acid sequence, 66 residues long: Large ribosomal subunit protein bL35 (66 aa).

Over residues 1–16 (MPKQKTHRASAKRFKR) the composition is skewed to basic residues. Positions 1-21 (MPKQKTHRASAKRFKRTGSGG) are disordered.

It belongs to the bacterial ribosomal protein bL35 family.

The protein is Large ribosomal subunit protein bL35 of Streptococcus sanguinis (strain SK36).